Consider the following 324-residue polypeptide: S-methyl-5'-thioadenosine phosphorylase (324 aa).

Phosphate contacts are provided by residues Ser-14, 57 to 58, and 90 to 91; these read RH and SA. Met-196 provides a ligand contact to substrate. Ser-197 lines the phosphate pocket. 220–222 contacts substrate; sequence DYD.

Belongs to the PNP/MTAP phosphorylase family. MTAP subfamily. As to quaternary structure, homotrimer.

Its subcellular location is the cytoplasm. The protein localises to the nucleus. The enzyme catalyses S-methyl-5'-thioadenosine + phosphate = 5-(methylsulfanyl)-alpha-D-ribose 1-phosphate + adenine. The protein operates within amino-acid biosynthesis; L-methionine biosynthesis via salvage pathway; S-methyl-5-thio-alpha-D-ribose 1-phosphate from S-methyl-5'-thioadenosine (phosphorylase route): step 1/1. Its function is as follows. Catalyzes the reversible phosphorylation of S-methyl-5'-thioadenosine (MTA) to adenine and 5-methylthioribose-1-phosphate. Involved in the breakdown of MTA, a major by-product of polyamine biosynthesis. Responsible for the first step in the methionine salvage pathway after MTA has been generated from S-adenosylmethionine. Has broad substrate specificity with 6-aminopurine nucleosides as preferred substrates. The protein is S-methyl-5'-thioadenosine phosphorylase of Coprinopsis cinerea (strain Okayama-7 / 130 / ATCC MYA-4618 / FGSC 9003) (Inky cap fungus).